Consider the following 157-residue polypeptide: MLELDLQRATDAATPDDAALRAWCELALRQRSADSEMTIRLVDEAEGRELNHTYRHKDYATNVLSFPADVPDELLDIPLLGDLVICVPVVEREAAEQGKSLQAHWAHLVIHGCLHLLGYDHIEDDEAEEMEALERELLAELGHPDPYADDENDSITH.

Zn(2+) is bound by residues histidine 111, histidine 115, and histidine 121.

The protein belongs to the endoribonuclease YbeY family. Requires Zn(2+) as cofactor.

Its subcellular location is the cytoplasm. Its function is as follows. Single strand-specific metallo-endoribonuclease involved in late-stage 70S ribosome quality control and in maturation of the 3' terminus of the 16S rRNA. This Pseudomonas putida (strain W619) protein is Endoribonuclease YbeY.